The chain runs to 381 residues: Flagellar P-ring protein (381 aa).

A signal peptide spans 1–33 (MQFFNTLHPTRPHWLLAALCLIASLLGAGTAQA).

The protein belongs to the FlgI family. In terms of assembly, the basal body constitutes a major portion of the flagellar organelle and consists of four rings (L,P,S, and M) mounted on a central rod.

Its subcellular location is the periplasm. It localises to the bacterial flagellum basal body. Functionally, assembles around the rod to form the L-ring and probably protects the motor/basal body from shearing forces during rotation. The sequence is that of Flagellar P-ring protein from Albidiferax ferrireducens (strain ATCC BAA-621 / DSM 15236 / T118) (Rhodoferax ferrireducens).